Consider the following 198-residue polypeptide: Probable molybdenum cofactor guanylyltransferase (198 aa).

GTP contacts are provided by residues Leu-9–Gly-11, Lys-22, Asp-66, and Asp-95. A Mg(2+)-binding site is contributed by Asp-95.

Belongs to the MobA family. Requires Mg(2+) as cofactor.

Its subcellular location is the cytoplasm. It carries out the reaction Mo-molybdopterin + GTP + H(+) = Mo-molybdopterin guanine dinucleotide + diphosphate. Functionally, transfers a GMP moiety from GTP to Mo-molybdopterin (Mo-MPT) cofactor (Moco or molybdenum cofactor) to form Mo-molybdopterin guanine dinucleotide (Mo-MGD) cofactor. The sequence is that of Probable molybdenum cofactor guanylyltransferase from Clostridium perfringens (strain SM101 / Type A).